We begin with the raw amino-acid sequence, 510 residues long: Inositol-3-phosphate synthase (510 aa).

Residues Gly70, Gly71, Asn72, Asn73, Asp143, Ile180, Gln190, Arg193, Thr230, Ala231, Asn232, Thr233, Gly281, Ser282, Asp306, Ser309, Asn340, Asn341, Asp342, Lys355, Gly393, Asp394, Asp422, and Ser423 each contribute to the NAD(+) site.

Belongs to the myo-inositol 1-phosphate synthase family. NAD(+) serves as cofactor.

The protein resides in the cytoplasm. It localises to the cytosol. The protein localises to the nucleus. The enzyme catalyses D-glucose 6-phosphate = 1D-myo-inositol 3-phosphate. It functions in the pathway polyol metabolism; myo-inositol biosynthesis; myo-inositol from D-glucose 6-phosphate: step 1/2. In terms of biological role, key enzyme in myo-inositol biosynthesis pathway that catalyzes the conversion of glucose 6-phosphate to 1-myo-inositol 1-phosphate in a NAD-dependent manner. The chain is Inositol-3-phosphate synthase from Zea mays (Maize).